The sequence spans 427 residues: Chaperone SurA (427 aa).

The signal sequence occupies residues 1–13; sequence MLGVALLSGAVHA. 2 consecutive PpiC domains span residues 164-265 and 275-374; these read SEEY…KLEE and RDEV…EVLG.

It is found in the periplasm. It catalyses the reaction [protein]-peptidylproline (omega=180) = [protein]-peptidylproline (omega=0). Its function is as follows. Chaperone involved in the correct folding and assembly of outer membrane proteins. Recognizes specific patterns of aromatic residues and the orientation of their side chains, which are found more frequently in integral outer membrane proteins. May act in both early periplasmic and late outer membrane-associated steps of protein maturation. This is Chaperone SurA from Pseudomonas putida (strain ATCC 47054 / DSM 6125 / CFBP 8728 / NCIMB 11950 / KT2440).